The chain runs to 374 residues: Putative cullin-like protein 2 (374 aa).

The protein belongs to the cullin family.

This chain is Putative cullin-like protein 2, found in Arabidopsis thaliana (Mouse-ear cress).